Here is a 270-residue protein sequence, read N- to C-terminus: Putative pyruvate, phosphate dikinase regulatory protein (270 aa).

148–155 (GISRTSKT) contributes to the ADP binding site.

The protein belongs to the pyruvate, phosphate/water dikinase regulatory protein family. PDRP subfamily.

The enzyme catalyses N(tele)-phospho-L-histidyl/L-threonyl-[pyruvate, phosphate dikinase] + ADP = N(tele)-phospho-L-histidyl/O-phospho-L-threonyl-[pyruvate, phosphate dikinase] + AMP + H(+). It catalyses the reaction N(tele)-phospho-L-histidyl/O-phospho-L-threonyl-[pyruvate, phosphate dikinase] + phosphate + H(+) = N(tele)-phospho-L-histidyl/L-threonyl-[pyruvate, phosphate dikinase] + diphosphate. Its function is as follows. Bifunctional serine/threonine kinase and phosphorylase involved in the regulation of the pyruvate, phosphate dikinase (PPDK) by catalyzing its phosphorylation/dephosphorylation. This chain is Putative pyruvate, phosphate dikinase regulatory protein, found in Bacillus cereus (strain AH187).